Consider the following 147-residue polypeptide: Hemoglobin subunit gamma-2 (147 aa).

The Globin domain maps to 3–147 (HFTEEDKATI…VASALSSRYH (145 aa)). At T13 the chain carries Phosphothreonine. 3 positions are modified to phosphoserine: S45, S51, and S53. N6-acetyllysine is present on K60. Position 64 (H64) interacts with heme b. K83 carries the post-translational modification N6-acetyllysine. Residue H93 coordinates heme b. C94 bears the S-nitrosocysteine mark. Phosphoserine occurs at positions 140, 143, and 144.

Belongs to the globin family. Heterotetramer of two alpha chains and two gamma chains in fetal hemoglobin (Hb F). Red blood cells.

In terms of biological role, gamma chains make up the fetal hemoglobin F, in combination with alpha chains. This Pongo pygmaeus (Bornean orangutan) protein is Hemoglobin subunit gamma-2 (HBG2).